A 671-amino-acid polypeptide reads, in one-letter code: Heat shock transcription factor hsf-1 (671 aa).

Low complexity-rich tracts occupy residues 1 to 17 (MQPT…QQQQ) and 38 to 52 (QQAP…NHQN). The interval 1–61 (MQPTGNQIQQ…NGAIGGKKSS (61 aa)) is disordered. The segment at 89–196 (LPVFLIKLWN…LLSQIKRKQS (108 aa)) is DNA-binding domain. A coiled-coil region spans residues 206–240 (NEQTQQNLEVVMAEMRAMREKAKNMEDKMNKLTKE). Disordered regions lie at residues 329–423 (QEPF…PLTH), 437–493 (YQGA…VNNY), 526–552 (HHPT…GLSP), and 612–671 (NAPE…PNLV). Residues 370-386 (GAQSSRYSDGGATSSRE) are compositionally biased toward polar residues. Residues 439 to 456 (GASPASGGPSTSSSAPSG) show a composition bias toward low complexity. 2 stretches are compositionally biased toward polar residues: residues 474 to 493 (ATRQ…VNNY) and 528 to 552 (PTTS…GLSP).

It belongs to the HSF family. As to quaternary structure, forms homodimers and homotrimers. Component of the DHIC (ddl-1-containing hsf-1 inhibitory complex), which contains at least ddl-1, ddl-2, hsb-1 and hsf-1. Within the complex, interacts with ddl-1. Formation of the DHIC may be dependent upon the Insulin/IGF-1-like signaling (IIS) mediated pathway. In terms of processing, phosphorylated. Post-translationally, sumoylated. Sumoylation may inhibit transcriptional activity in response to heat shock. Expressed in intestinal cells, body wall muscle cells, and hypodermal cells, as well as many neurons in the head and tail.

It is found in the nucleus. The protein resides in the cytoplasm. In terms of biological role, functions as a stress-inducible and DNA-binding transcription factor, playing a central role in the transcriptional activation of the heat shock response (HSR), leading to the expression of a large class of molecular chaperones, heat shock proteins (HSPs), that protect cells from cellular insult damage. Upon exposure to heat and other stress stimuli, activates gene transcription through binding to site-specific heat shock elements (HSEs) present in the promoter regions of target genes, such as the HSPs. Binds to inverted 5'-NGAAN-3' pentamer DNA sequences in HSEs. Involved in positive modulation of expression of heat shock protein hsp-16.2 in response to heat shock; may act in concert with homeodomain-interacting protein kinase hpk-1. In response to heat shock or starvation, required for the modulation of lifespan, and protection against aberrant protein aggregation proteotoxicity; may act in parallel with the Insulin/IGF-1-like signaling (IIS) mediated pathway. Plays a role in modulating autophagy, in response to a moderate and short-term heat shock, also known as a hormetic heat shock. Involved in positive modulation of ascaroside pheromone biosynthesis in response to heat shock, perhaps by directly activating transcription of peroxisomal fatty acid beta-oxidation genes. Required in modulating the response to infection by either Gram-negative or Gram-positive bacteria, perhaps acting via regulation of expression of Hsp90/daf-21 and members of the small heat shock protein (HSP20) family. May play a role downstream of the daf-16/FOXO and daf-2 signaling pathway in response to bacterial pathogens. Modulates expression of multiple microRNA genes, in both heat shock-dependent and -independent manner. Independent of heat shock, required to modulate expression of genes involved in larval development, mainly distinct from HSPs; acts in concert with putative transcription factor efl-1/E2F, which may form part of a multiprotein DRM complex. Independent of heat shock, involved in promoting death of the linker cell, a male-specific cell which guides the elongation of the gonad; perhaps acting by modulating expression of ubiquitin-conjugating enzyme let-70. Plays a role in egg-laying. The polypeptide is Heat shock transcription factor hsf-1 (Caenorhabditis elegans).